Reading from the N-terminus, the 266-residue chain is Imidazole glycerol phosphate synthase subunit HisF (266 aa).

Active-site residues include Asp-11 and Asp-130.

This sequence belongs to the HisA/HisF family. As to quaternary structure, heterodimer of HisH and HisF.

The protein resides in the cytoplasm. It carries out the reaction 5-[(5-phospho-1-deoxy-D-ribulos-1-ylimino)methylamino]-1-(5-phospho-beta-D-ribosyl)imidazole-4-carboxamide + L-glutamine = D-erythro-1-(imidazol-4-yl)glycerol 3-phosphate + 5-amino-1-(5-phospho-beta-D-ribosyl)imidazole-4-carboxamide + L-glutamate + H(+). The protein operates within amino-acid biosynthesis; L-histidine biosynthesis; L-histidine from 5-phospho-alpha-D-ribose 1-diphosphate: step 5/9. In terms of biological role, IGPS catalyzes the conversion of PRFAR and glutamine to IGP, AICAR and glutamate. The HisF subunit catalyzes the cyclization activity that produces IGP and AICAR from PRFAR using the ammonia provided by the HisH subunit. The chain is Imidazole glycerol phosphate synthase subunit HisF from Albidiferax ferrireducens (strain ATCC BAA-621 / DSM 15236 / T118) (Rhodoferax ferrireducens).